The chain runs to 508 residues: Protoporphyrinogen oxidase 2, chloroplastic/mitochondrial (508 aa).

Residues 1 to 22 (MASGAVADHQIEAVSGKRVAVV) constitute a chloroplast and mitochondrion transit peptide. FAD is bound by residues 23 to 28 (GAGVSG), 46 to 47 (EA), and 68 to 71 (GANT). The interval 219–239 (KGGKSRDTKSSPGTKKGSRGS) is disordered. FAD contacts are provided by residues Val-268 and 475 to 477 (LSV).

The protein belongs to the protoporphyrinogen/coproporphyrinogen oxidase family. Protoporphyrinogen oxidase subfamily. FAD is required as a cofactor.

The protein resides in the plastid. The protein localises to the chloroplast. It is found in the mitochondrion. The enzyme catalyses protoporphyrinogen IX + 3 O2 = protoporphyrin IX + 3 H2O2. Its pathway is porphyrin-containing compound metabolism; protoporphyrin-IX biosynthesis; protoporphyrin-IX from protoporphyrinogen-IX: step 1/1. It participates in porphyrin-containing compound metabolism; chlorophyll biosynthesis. Its function is as follows. Catalyzes the 6-electron oxidation of protoporphyrinogen-IX to form protoporphyrin-IX. This chain is Protoporphyrinogen oxidase 2, chloroplastic/mitochondrial (PPOX2), found in Arabidopsis thaliana (Mouse-ear cress).